The sequence spans 348 residues: Growth-regulating factor 5 (348 aa).

The 36-residue stretch at 24-59 folds into the QLQ domain; it reads VFTAAQWAELEQQALIYKYLVAGVPVPGDLLLPIRP. Short sequence motifs (bipartite nuclear localization signal) lie at residues 94-112 and 130-137; these read KKLD…KKWR and RGRNRSRK. Residues 97–141 form the WRC domain; that stretch reads DPEPWRCRRTDGKKWRCSKEAHPDSKYCERHMHRGRNRSRKPVES. Disordered regions lie at residues 125-165 and 306-348; these read ERHM…HDTD and LRPF…PRCD. The segment covering 127-136 has biased composition (basic residues); that stretch reads HMHRGRNRSR. The span at 148–161 shows a compositional bias: polar residues; it reads PQSQPQLSNVTTAT. Residues 306-320 show a composition bias toward basic and acidic residues; that stretch reads LRPFFDEWPGRRDSW. The span at 329–340 shows a compositional bias: polar residues; the sequence is NQTSFSTTQLSI.

The protein belongs to the GRF family.

The protein resides in the nucleus. Its function is as follows. Transcription activator that plays a regulatory role in gibberellin-induced stem elongation. The sequence is that of Growth-regulating factor 5 (GRF5) from Oryza sativa subsp. japonica (Rice).